The chain runs to 132 residues: Translation initiation factor 2 subunit beta (132 aa).

Residues 1–30 form a disordered region; sequence MDYEEQLDRAMDEKPDVTGSETRFEVPDPN.

Belongs to the eIF-2-beta/eIF-5 family. Heterotrimer composed of an alpha, a beta and a gamma chain.

EIF-2 functions in the early steps of protein synthesis by forming a ternary complex with GTP and initiator tRNA. The protein is Translation initiation factor 2 subunit beta of Halobacterium salinarum (strain ATCC 29341 / DSM 671 / R1).